A 239-amino-acid chain; its full sequence is Protein NtpR (239 aa).

The Glutamine amidotransferase type-1 domain maps to 12–239 (LIRATDTFQG…GLFDFFVQEF (228 aa)). The Nucleophile role is filled by Cys113. Active-site residues include His217 and Glu219.

The polypeptide is Protein NtpR (ntpR) (Enterococcus hirae (strain ATCC 9790 / DSM 20160 / JCM 8729 / LMG 6399 / NBRC 3181 / NCIMB 6459 / NCDO 1258 / NCTC 12367 / WDCM 00089 / R)).